The sequence spans 1716 residues: DNA-directed RNA polymerase I subunit RPA1 (1716 aa).

Zn(2+) contacts are provided by Cys64, Cys67, Cys74, His77, Cys104, and Cys107. A clamp region spans residues 110-201; it reads LTCPRAAIHL…VAHFWKTHMA (92 aa). Zn(2+) is bound by residues Cys205 and Cys208. The segment at 327 to 433 is clamp; that stretch reads FTNGQTVNLQ…IRQILEKKEG (107 aa). A rudder region spans residues 410–423; it reads DSDMDKLMLEKYPG. Residues Lys431, Arg436, and Arg443 each coordinate DNA. The segment at 475–549 is involved in RRN3 binding to Pol I complex; sequence YPQPVTPWNV…QGAKVVCRHV (75 aa). Position 559 (Arg559) interacts with RNA. Positions 595, 597, and 599 each coordinate Mg(2+). Position 599 (Asp599) interacts with RNA. The tract at residues 812 to 890 is funnel; sequence KPNADVMRQR…NEINKACMPF (79 aa). Residues 967 to 1008 are bridging helix; it reads RPPEFFFHCMAGREGLVDTAVKTSRSGYLQRCIIKHLEGLVI. The mediates the interaction with TOP2A stretch occupies residues 1067-1162; the sequence is ADPQKVLRHF…SLSVWRPDIH (96 aa). Residues 1214–1255 form a trigger loop region; sequence PGEAVGLLAAQSIGEPSTQMTLNTFHFAGRGEMNVTLGIPRL. A DNA-binding site is contributed by Arg1256. A disordered region spans residues 1368–1493; the sequence is ASAFRSVNTR…RHSRPQGAEA (126 aa). Basic and acidic residues predominate over residues 1380–1397; that stretch reads TQKDLDDTEDSGRNRREE. 2 stretches are compositionally biased toward acidic residues: residues 1398-1419 and 1429-1451; these read ERDE…DADA and EEEV…VQEE. Residues 1452–1464 are compositionally biased toward basic and acidic residues; it reads ENIKGEGAHQTHE. Residues 1465 to 1477 show a composition bias toward acidic residues; the sequence is PDEEEGSGLEEES.

It belongs to the RNA polymerase beta' chain family. In terms of assembly, component of the RNA polymerase I (Pol I) complex consisting of 13 subunits: a ten-subunit catalytic core composed of POLR1A/RPA1, POLR1B/RPA2, POLR1C/RPAC1, POLR1D/RPAC2, POLR1H/RPA12, POLR2E/RPABC1, POLR2F/RPABC2, POLR2H/RPABC3, POLR2K/RPABC4 and POLR2L/RPABC5; a mobile stalk subunit POLR1F/RPA43 protruding from the core and additional subunits homologous to general transcription factors POLR1E/RPA49 and POLR1G/RPA34. Part of Pol I pre-initiation complex (PIC), in which Pol I core assembles with RRN3 and promoter-bound UTBF and SL1/TIF-IB complex. Interacts (via dock II domain) with TOP2A; this interaction may assist Pol I transcription initiation by releasing supercoils occurring during DNA unwinding. Interacts with CAVIN1; this interaction induces the dissociation of Pol I complex paused at rDNA terminator sequences. Interacts with MYO1C. Interacts with ERBB2. Interacts with DDX11. Interacts with RECQL5. Mg(2+) serves as cofactor. Phosphorylated.

Its subcellular location is the nucleus. The protein resides in the nucleolus. It localises to the chromosome. The enzyme catalyses RNA(n) + a ribonucleoside 5'-triphosphate = RNA(n+1) + diphosphate. Catalytic core component of RNA polymerase I (Pol I), a DNA-dependent RNA polymerase which synthesizes ribosomal RNA precursors using the four ribonucleoside triphosphates as substrates. Transcribes 47S pre-rRNAs from multicopy rRNA gene clusters, giving rise to 5.8S, 18S and 28S ribosomal RNAs. Pol I-mediated transcription cycle proceeds through transcription initiation, transcription elongation and transcription termination stages. During transcription initiation, Pol I pre-initiation complex (PIC) is recruited by the selectivity factor 1 (SL1/TIF-IB) complex bound to the core promoter that precedes an rDNA repeat unit. The PIC assembly bends the promoter favoring the formation of the transcription bubble and promoter escape. Once the polymerase has escaped from the promoter it enters the elongation phase during which RNA is actively polymerized, based on complementarity with the template DNA strand. Highly processive, assembles in structures referred to as 'Miller trees' where many elongating Pol I complexes queue and transcribe the same rDNA coding regions. At terminator sequences downstream of the rDNA gene, PTRF interacts with Pol I and halts Pol I transcription leading to the release of the RNA transcript and polymerase from the DNA. Forms Pol I active center together with the second largest subunit POLR1B/RPA2. Appends one nucleotide at a time to the 3' end of the nascent RNA, with POLR1A/RPA1 contributing a Mg(2+)-coordinating DxDGD motif, and POLR1B/RPA2 participating in the coordination of a second Mg(2+) ion and providing lysine residues believed to facilitate Watson-Crick base pairing between the incoming nucleotide and the template base. Typically, Mg(2+) ions direct a 5' nucleoside triphosphate to form a phosphodiester bond with the 3' hydroxyl of the preceding nucleotide of the nascent RNA, with the elimination of pyrophosphate. Has proofreading activity: Pauses and backtracks to allow the cleavage of a missincorporated nucleotide via POLR1H/RPA12. High Pol I processivity is associated with decreased transcription fidelity. In Rattus norvegicus (Rat), this protein is DNA-directed RNA polymerase I subunit RPA1.